Consider the following 148-residue polypeptide: Deoxyuridine 5'-triphosphate nucleotidohydrolase (148 aa).

Substrate is bound by residues 67–69 (RSG), N80, 84–86 (LID), and M94.

Belongs to the dUTPase family. Mg(2+) serves as cofactor.

It carries out the reaction dUTP + H2O = dUMP + diphosphate + H(+). Its pathway is pyrimidine metabolism; dUMP biosynthesis; dUMP from dCTP (dUTP route): step 2/2. In terms of biological role, this enzyme is involved in nucleotide metabolism: it produces dUMP, the immediate precursor of thymidine nucleotides and it decreases the intracellular concentration of dUTP so that uracil cannot be incorporated into DNA. The sequence is that of Deoxyuridine 5'-triphosphate nucleotidohydrolase from Ralstonia pickettii (strain 12J).